We begin with the raw amino-acid sequence, 232 residues long: Large ribosomal subunit protein uL1 (232 aa).

This sequence belongs to the universal ribosomal protein uL1 family. Part of the 50S ribosomal subunit.

In terms of biological role, binds directly to 23S rRNA. The L1 stalk is quite mobile in the ribosome, and is involved in E site tRNA release. Functionally, protein L1 is also a translational repressor protein, it controls the translation of the L11 operon by binding to its mRNA. The sequence is that of Large ribosomal subunit protein uL1 from Liberibacter asiaticus (Citrus greening disease).